The following is a 95-amino-acid chain: Large ribosomal subunit protein uL23 (95 aa).

This sequence belongs to the universal ribosomal protein uL23 family. Part of the 50S ribosomal subunit. Contacts protein L29, and trigger factor when it is bound to the ribosome.

One of the early assembly proteins it binds 23S rRNA. One of the proteins that surrounds the polypeptide exit tunnel on the outside of the ribosome. Forms the main docking site for trigger factor binding to the ribosome. The sequence is that of Large ribosomal subunit protein uL23 from Syntrophotalea carbinolica (strain DSM 2380 / NBRC 103641 / GraBd1) (Pelobacter carbinolicus).